We begin with the raw amino-acid sequence, 586 residues long: Serine/threonine-protein kinase TDA1 (586 aa).

Residues Met-1–Gly-26 form a disordered region. Positions Val-39 to Ile-351 constitute a Protein kinase domain. ATP is bound by residues Leu-45–Val-53 and Lys-68. Residue Asp-180 is the Proton acceptor of the active site. The segment at Thr-503–Thr-524 is disordered. Thr-504 is subject to Phosphothreonine. Residues Ser-509 and Ser-518 each carry the phosphoserine modification. Thr-538 carries the phosphothreonine modification. A Phosphoserine modification is found at Ser-578.

Belongs to the protein kinase superfamily. Ser/Thr protein kinase family. Interacts with RIM11.

The protein localises to the cytoplasm. It localises to the nucleus. It carries out the reaction L-seryl-[protein] + ATP = O-phospho-L-seryl-[protein] + ADP + H(+). It catalyses the reaction L-threonyl-[protein] + ATP = O-phospho-L-threonyl-[protein] + ADP + H(+). In terms of biological role, serine/threonine protein kinase shown to have protein phosphorylation activity in vitro. The sequence is that of Serine/threonine-protein kinase TDA1 (TDA1) from Saccharomyces cerevisiae (strain ATCC 204508 / S288c) (Baker's yeast).